Here is a 134-residue protein sequence, read N- to C-terminus: ATP synthase epsilon chain (134 aa).

It belongs to the ATPase epsilon chain family. As to quaternary structure, F-type ATPases have 2 components, CF(1) - the catalytic core - and CF(0) - the membrane proton channel. CF(1) has five subunits: alpha(3), beta(3), gamma(1), delta(1), epsilon(1). CF(0) has three main subunits: a, b and c.

The protein resides in the cell membrane. Its function is as follows. Produces ATP from ADP in the presence of a proton gradient across the membrane. This chain is ATP synthase epsilon chain, found in Clostridium botulinum (strain Eklund 17B / Type B).